A 733-amino-acid chain; its full sequence is MLDCGKKAVKSQVISGRLEKFVRLDSMDSRYSQTSDTGLNRCTLNLQGPTRGGGAQGNNVSSGSFKKGFRKGSKGLWSIGRSIGLGVSRAVFPEDLKVSEKKIFDPQDKFLLLCNKLFVTSCILAVSVDPLFLYLPFVKDNEKCIGIDRKLAIIATTLRTVIDAFYLFHMALRFRTAFVAPSSRVFGRGELVIDPAQIAKRYLQQYFIIDFLSVLPLPQIVVWRFLYISKGASVLATKRALRSIILVQYIPRFIRLYPLSSELKRTAGVFAETAWAGAAYYLLLYMLASHIVGAIWYLLALERYNGCWTKVCSNSSLDCHRNFLFCGNEKMDGYAAWTTIKDSVLQLNCPVNTTDNPPFDFGIYLRALSSGIVSSKSFVSKYFFCLWWGLQNLSTLGQGLETSTYPGEVIFSIALAIAGLLLFALLIGNMQTYLQSLTIRLEEMRVKRRDSEQWMHHRMLPPELRERVRRYDQYKWLETRGVDEENLVQNLPKDLRRDIKRHLCLALVRRVPLFENMDERLLDAICERLKPCLYTESSYLVREGDPVNEMLFIIRGRLESVTTDGGRSGFFNRSLLKEGDFCGEELLTWALDPKSGSNLPSSTRTAKALTEVEAFALIADELKFVASQFRRLHSRQVQHTFRFYSQQWRTWAAIFIQAAWRRYVKKKKLEQLRKEEEEGEGSVTSIRATFLASKFAANALRKVHKNRIEAKSTIELVKYQKPSEPDFSADDTS.

The Cytoplasmic segment spans residues methionine 1–leucine 117. The chain crosses the membrane as a helical span at residues phenylalanine 118 to valine 138. The Extracellular segment spans residues lysine 139–leucine 151. A helical transmembrane segment spans residues alanine 152–leucine 172. The Cytoplasmic segment spans residues arginine 173–phenylalanine 207. The helical transmembrane segment at isoleucine 208 to isoleucine 228 threads the bilayer. Residues serine 229–arginine 239 are Extracellular-facing. A helical transmembrane segment spans residues alanine 240 to serine 260. At serine 261–tyrosine 280 the chain is on the cytoplasmic side. A helical membrane pass occupies residues tyrosine 281–leucine 301. Residues glutamate 302–proline 406 lie on the Extracellular side of the membrane. A helical membrane pass occupies residues glycine 407–isoleucine 427. Over glycine 428–serine 733 the chain is Cytoplasmic. A nucleoside 3',5'-cyclic phosphate-binding positions include leucine 513–valine 637 and glutamate 584. Positions phenylalanine 629–tyrosine 644 are calmodulin-binding. Positions arginine 649–glutamate 678 constitute an IQ domain.

Belongs to the cyclic nucleotide-gated cation channel (TC 1.A.1.5) family. In terms of assembly, homotetramer or heterotetramer.

Its subcellular location is the cell membrane. Putative cyclic nucleotide-gated ion channel. The protein is Putative cyclic nucleotide-gated ion channel 9 (CNGC9) of Arabidopsis thaliana (Mouse-ear cress).